Consider the following 524-residue polypeptide: Cytochrome c nitrite reductase subunit NrfA (524 aa).

The first 24 residues, 1 to 24 (MNNQKTFKGLRLAALGLVAVAAFT), serve as a signal peptide directing secretion. The tract at residues 29–39 (DVSTELKTPVY) is interaction with NrfH. Ca(2+)-binding residues include glycine 78, glutamate 117, and alanine 118. Heme is bound by residues histidine 121, cysteine 147, cysteine 150, lysine 151, cysteine 187, cysteine 190, and histidine 191. An interaction with NrfH region spans residues 221-222 (RN). The heme site is built by cysteine 229, cysteine 232, and histidine 233. Glutamate 235, tyrosine 236, lysine 295, and glutamine 297 together coordinate Ca(2+). The heme site is built by histidine 309, cysteine 316, cysteine 319, histidine 320, histidine 335, cysteine 349, cysteine 352, histidine 353, and histidine 434. The tract at residues 318–331 (DCHMSYTRSDDKKK) is interaction with NrfH. The interval 351-355 (QCHSD) is interaction with NrfH.

It belongs to the cytochrome c-552 family. Component of the NrfHA cytochrome c nitrite reductase complex composed of 4 NrfA catalytic subunits and 2 NrfH quinone-binding subunits. NrfA homodimer interacts with NrfH. Ca(2+) serves as cofactor. Requires heme as cofactor.

It localises to the cell inner membrane. It catalyses the reaction 6 Fe(III)-[cytochrome c] + NH4(+) + 2 H2O = 6 Fe(II)-[cytochrome c] + nitrite + 8 H(+). Its function is as follows. Catalytic subunit of the cytochrome c nitrite reductase holocomplex NrfHA. Has both nitrite and sulfite reductase activities. Catalyzes the reduction of nitrite to ammonia, consuming six electrons acquired by the electron donor subunit NrfH from the menaquinone pool, in an anaerobic respiratory process of nitrite. The other biological function of the NrfHA holocomplex is to detoxify nitrite. This function is essential for the survival of this organism as it enables it to overcome inhibition by nitrite, which is produced by other organisms living in the same environment. In Nitratidesulfovibrio vulgaris (strain ATCC 29579 / DSM 644 / CCUG 34227 / NCIMB 8303 / VKM B-1760 / Hildenborough) (Desulfovibrio vulgaris), this protein is Cytochrome c nitrite reductase subunit NrfA.